The following is a 624-amino-acid chain: Adenine deaminase 1 (624 aa).

The protein belongs to the metallo-dependent hydrolases superfamily. Adenine deaminase family. It depends on Mn(2+) as a cofactor.

The catalysed reaction is adenine + H2O + H(+) = hypoxanthine + NH4(+). This Bradyrhizobium sp. (strain ORS 278) protein is Adenine deaminase 1.